The following is a 721-amino-acid chain: Mitogen-activated protein kinase 6 (721 aa).

M1 is covalently cross-linked (Peptide (Met-Gly) (interchain with G-Cter in ubiquitin)). A Protein kinase domain is found at 20 to 316; that stretch reads YMDLKPLGCG…AEEALSHPYM (297 aa). ATP contacts are provided by residues 26–34 and K49; that span reads LGCGGNGLV. Residue D152 is the Proton acceptor of the active site. Position 189 is a phosphoserine; by PAK1, PAK2 and PAK3 (S189). An SEG motif motif is present at residues 189–191; sequence SEG. Positions 332-337 match the FRIEDE motif motif; that stretch reads FHIEDE. 6 positions are modified to phosphoserine: S386, S452, S556, S558, S665, and S684. The span at 701 to 715 shows a compositional bias: polar residues; that stretch reads AMKSSPQIPHQTYSS. The segment at 701–721 is disordered; it reads AMKSSPQIPHQTYSSILKHLN.

The protein belongs to the protein kinase superfamily. CMGC Ser/Thr protein kinase family. MAP kinase subfamily. In terms of assembly, heterodimer with ERK4/MAPK4. Interacts with (via FRIEDE motif) MAPKAPK5. Interacts with UBE3A; this interaction may be indirect and mediated by HERC2, possibly via HERC2 interaction with NEURL4. Requires Mg(2+) as cofactor. Post-translationally, phosphorylated at Ser-189 by PAK1, PAK2 and PAK3 resulting in catalytic activation. Phosphorylated by MAPKAPK5 at other sites. In terms of processing, ubiquitination at Met-1 leads to degradation by the proteasome pathway. Highest expression in the skeletal muscle, followed by the brain. Also found in heart, placenta, lung, liver, pancreas, kidney and skin fibroblasts.

The protein resides in the cytoplasm. It localises to the nucleus. The enzyme catalyses L-seryl-[protein] + ATP = O-phospho-L-seryl-[protein] + ADP + H(+). It carries out the reaction L-threonyl-[protein] + ATP = O-phospho-L-threonyl-[protein] + ADP + H(+). Activated by phosphorylation at Ser-189. In terms of biological role, atypical MAPK protein. Phosphorylates microtubule-associated protein 2 (MAP2) and MAPKAPK5. The precise role of the complex formed with MAPKAPK5 is still unclear, but the complex follows a complex set of phosphorylation events: upon interaction with atypical MAPKAPK5, ERK3/MAPK6 is phosphorylated at Ser-189 and then mediates phosphorylation and activation of MAPKAPK5, which in turn phosphorylates ERK3/MAPK6. May promote entry in the cell cycle. This Homo sapiens (Human) protein is Mitogen-activated protein kinase 6 (MAPK6).